A 294-amino-acid polypeptide reads, in one-letter code: Potassium-transporting ATPase subunit beta (294 aa).

Topologically, residues 1 to 36 are cytoplasmic; the sequence is MAALQEKKSCSQRMAEFRQYCWNPDTGQMLGRTPAR. The chain crosses the membrane as a helical; Signal-anchor for type II membrane protein span at residues 37–57; sequence WVWISLYYAAFYVVMTGLFAL. The Extracellular segment spans residues 58 to 294; sequence CIYVLMQTID…KVEFKLTIQK (237 aa). N-linked (GlcNAc...) asparagine glycans are attached at residues N99, N103, N130, N146, and N161. C131 and C152 form a disulfide bridge. C162 and C178 are joined by a disulfide. Residues N193 and N225 are each glycosylated (N-linked (GlcNAc...) asparagine). Residues 194–294 form an immunoglobulin-like region; the sequence is NTAPRVDCTF…KVEFKLTIQK (101 aa). A disulfide bridge connects residues C201 and C266.

This sequence belongs to the X(+)/potassium ATPases subunit beta family. The ATPase pump is composed of two subunits: alpha (catalytic) and beta (regulatory). Interacts with alpha subunit ATP12A; this interaction is required for the formation of a functionally active pump and targeting at the plasma membrane. Interacts (via N-terminus) with alpha subunit ATP4A (via the P-domain). In terms of processing, N-glycosylation is necessary for assembly and functional expression of the pump at the plasma membrane. Stomach.

The protein localises to the apical cell membrane. It is found in the cell membrane. Functionally, the beta subunit of the gastric H(+)/K(+) ATPase pump which transports H(+) ions in exchange for K(+) ions across the apical membrane of parietal cells. Plays a structural and regulatory role in the assembly and membrane targeting of a functionally active pump. Within a transport cycle, the transfer of a H(+) ion across the membrane is coupled to ATP hydrolysis and is associated with a transient phosphorylation of the alpha subunit that shifts the pump conformation from inward-facing (E1) to outward-facing state (E2). Interacts with the phosphorylation domain of the alpha subunit and functions as a ratchet, stabilizing the lumenal-open E2 conformation and preventing the reverse reaction of the transport cycle. The sequence is that of Potassium-transporting ATPase subunit beta (Atp4b) from Rattus norvegicus (Rat).